The primary structure comprises 395 residues: Acetate kinase (395 aa).

N8 lines the Mg(2+) pocket. K15 serves as a coordination point for ATP. R89 is a binding site for substrate. Catalysis depends on D146, which acts as the Proton donor/acceptor. ATP contacts are provided by residues 206-210 (HLGNG), 281-283 (DLR), and 329-333 (GIGEN). E382 serves as a coordination point for Mg(2+).

Belongs to the acetokinase family. As to quaternary structure, homodimer. The cofactor is Mg(2+). Mn(2+) serves as cofactor.

The protein resides in the cytoplasm. The catalysed reaction is acetate + ATP = acetyl phosphate + ADP. It participates in metabolic intermediate biosynthesis; acetyl-CoA biosynthesis; acetyl-CoA from acetate: step 1/2. Induced by glucose excess, the induction may be mediated by CcpA transcriptional regulator. Functionally, catalyzes the formation of acetyl phosphate from acetate and ATP. Can also catalyze the reverse reaction. Appears to favor the formation of acetate. Involved in the secretion of excess carbohydrate. The chain is Acetate kinase from Bacillus subtilis (strain 168).